A 372-amino-acid chain; its full sequence is Probable E3 ubiquitin-protein ligase makorin-1 (372 aa).

2 consecutive C3H1-type zinc fingers follow at residues 20–45 (KHVTCRYFMHGLCKEGDNCRYSHDLT) and 48–75 (KPAAMICKFFQKGNCVFGERCRFDHCKP). The disordered stretch occupies residues 78 to 110 (NEEFSSPQMLPPSSPSPSTDPESSQPAPRPKTQ). Residues 93 to 103 (SPSTDPESSQP) are compositionally biased toward low complexity. The segment at 153–180 (ALRKQLCPYAAVGECRYGINCAYLHGDV) adopts a C3H1-type 3 zinc-finger fold. A makorin-type Cys-His region spans residues 181-208 (CDMCGLQVLHPTDNSQRSQHTKACIEAH). The RING-type zinc finger occupies 226 to 280 (CGVCMEVVFEKANPSERRFGILSNCNHCYCLKCIRKWRSAKQFESKIIKSCPECR). The C3H1-type 4 zinc-finger motif lies at 309 to 338 (GMGRKPCRYFDEGRGICPFGANCFYKHAFP).

The enzyme catalyses S-ubiquitinyl-[E2 ubiquitin-conjugating enzyme]-L-cysteine + [acceptor protein]-L-lysine = [E2 ubiquitin-conjugating enzyme]-L-cysteine + N(6)-ubiquitinyl-[acceptor protein]-L-lysine.. It participates in protein modification; protein ubiquitination. Functionally, E3 ubiquitin ligase catalyzing the covalent attachment of ubiquitin moieties onto substrate proteins. The protein is Probable E3 ubiquitin-protein ligase makorin-1 of Tetraodon nigroviridis (Spotted green pufferfish).